A 414-amino-acid polypeptide reads, in one-letter code: Gamma-glutamyl phosphate reductase (414 aa).

The protein belongs to the gamma-glutamyl phosphate reductase family.

The protein localises to the cytoplasm. It carries out the reaction L-glutamate 5-semialdehyde + phosphate + NADP(+) = L-glutamyl 5-phosphate + NADPH + H(+). Its pathway is amino-acid biosynthesis; L-proline biosynthesis; L-glutamate 5-semialdehyde from L-glutamate: step 2/2. Catalyzes the NADPH-dependent reduction of L-glutamate 5-phosphate into L-glutamate 5-semialdehyde and phosphate. The product spontaneously undergoes cyclization to form 1-pyrroline-5-carboxylate. The sequence is that of Gamma-glutamyl phosphate reductase from Bacillus anthracis (strain A0248).